The primary structure comprises 495 residues: Protein SLENDER RICE1-LIKE 1 (495 aa).

A GRAS domain is found at 77 to 449; it reads EEEEVAGIRL…RPLFSASAWE (373 aa). The leucine repeat I (LRI) stretch occupies residues 84–140; it reads IRLVHLLMSCAGAIEAGDHALASAQLADSHAALAAVSAASGIGRVAVHFTTALSRRL. Residues 158-223 are VHIID; that stretch reads YHHFYEACPY…GGPPFLRITG (66 aa). The short motif at 189 to 193 is the VHIID element; that stretch reads VHVID. Residues 237 to 269 form a leucine repeat II (LRII) region; that stretch reads DVGLRLADLARSVRVRFSFRGVAANSLDEVRPW. The interval 279–371 is PFYRE; sequence VAFNSVLQLH…EAYLQREICD (93 aa). The LXXLL motif signature appears at 287-291; sequence LHRLL. Residues 374–449 are SAW; the sequence is CGEGAARRER…RPLFSASAWE (76 aa). Positions 451-495 are disordered; it reads AGDGGGDNNNNSNSNVSGSSGSDSNNSGSSNGKSSGARDGSSVCL. A compositionally biased stretch (low complexity) spans 458–485; the sequence is NNNNSNSNVSGSSGSDSNNSGSSNGKSS.

Belongs to the GRAS family. Expressed in elongating internodes and flowers. Expressed in floral meristem, stamen primordia and tapetum in developing anthers. Expressed at low levels in roots, shoot apices and rachis.

It is found in the nucleus. In terms of biological role, probable transcriptional regulator that acts as a repressor of the gibberellin (GA) signaling pathway. Its repressive activity is weaker than that of SLR1. Its overexpression prevents the GA signaling pathway and induces a dwarf phenotype. In Oryza sativa subsp. japonica (Rice), this protein is Protein SLENDER RICE1-LIKE 1.